A 398-amino-acid chain; its full sequence is GPI mannosyltransferase 1 (398 aa).

Helical transmembrane passes span 4–24 (LKYL…FGLY), 79–99 (WYHF…LIIL), 114–136 (MILS…GSAE), 156–176 (VILS…PIIY), 209–229 (IIIT…KYGW), 271–291 (IEKI…PLIF), 305–325 (FVFV…FLIF), 341–361 (ITGI…LYFA), and 375–395 (GLMY…MKFI).

The protein belongs to the PIGM family.

Its subcellular location is the endoplasmic reticulum membrane. It functions in the pathway glycolipid biosynthesis; glycosylphosphatidylinositol-anchor biosynthesis. Its function is as follows. Mannosyltransferase involved in glycosylphosphatidylinositol-anchor biosynthesis. Transfers the first alpha-1,4-mannose to GlcN-acyl-PI during GPI precursor assembly. Required for cell wall integrity. The chain is GPI mannosyltransferase 1 (GPI14) from Candida albicans (strain SC5314 / ATCC MYA-2876) (Yeast).